The sequence spans 242 residues: 2-C-methyl-D-erythritol 4-phosphate cytidylyltransferase (242 aa).

Belongs to the IspD/TarI cytidylyltransferase family. IspD subfamily.

The catalysed reaction is 2-C-methyl-D-erythritol 4-phosphate + CTP + H(+) = 4-CDP-2-C-methyl-D-erythritol + diphosphate. The protein operates within isoprenoid biosynthesis; isopentenyl diphosphate biosynthesis via DXP pathway; isopentenyl diphosphate from 1-deoxy-D-xylulose 5-phosphate: step 2/6. Its function is as follows. Catalyzes the formation of 4-diphosphocytidyl-2-C-methyl-D-erythritol from CTP and 2-C-methyl-D-erythritol 4-phosphate (MEP). In Vesicomyosocius okutanii subsp. Calyptogena okutanii (strain HA), this protein is 2-C-methyl-D-erythritol 4-phosphate cytidylyltransferase.